A 353-amino-acid polypeptide reads, in one-letter code: C-X-C chemokine receptor type 4 (353 aa).

The segment at 1–22 (MDGFRIFTSDNYTEDDLGSGDY) is important for chemokine binding and signaling. Over 1–39 (MDGFRIFTSDNYTEDDLGSGDYDSIKEPCFREENAHFNR) the chain is Extracellular. N11 carries N-linked (GlcNAc...) asparagine glycosylation. A Sulfotyrosine modification is found at Y12. An O-linked (Xyl...) (chondroitin sulfate) serine glycan is attached at S19. A Sulfotyrosine modification is found at Y22. 2 disulfide bridges follow: C29-C275 and C110-C187. The helical transmembrane segment at 40 to 64 (IFLPTVYSIIFLTGIVGNGLVILVM) threads the bilayer. Residues 65-78 (GYQKKLRSMTDKYR) lie on the Cytoplasmic side of the membrane. The helical transmembrane segment at 79–100 (LHLSVADLLFVLTLPFWAVDAV) threads the bilayer. The segment at 95 to 98 (WAVD) is chemokine binding. Residues 101–111 (ANWYFGKFLCK) are Extracellular-facing. The chain crosses the membrane as a helical span at residues 112 to 131 (AVHVIYTVNLYSSVLILAFI). A chemokine binding region spans residues 114 to 118 (HVIYT). Residues 132 to 155 (SLDRYLAIVHATNSQRPRKLLAEK) are Cytoplasmic-facing. Positions 134-136 (DRY) match the Important for signaling motif. An involved in dimerization; when bound to chemokine region spans residues 136–148 (YLAIVHATNSQRP). Residues 156–175 (VVYVGVWIPALLLTIPDFIF) form a helical membrane-spanning segment. The Extracellular portion of the chain corresponds to 176–196 (ANVREGDGRYICDRFYPNDLW). The interval 187–191 (CDRFY) is chemokine binding, important for signaling. The tract at residues 192 to 211 (PNDLWLVVFQFQHIMVGLIL) is involved in dimerization. A helical transmembrane segment spans residues 197-217 (LVVFQFQHIMVGLILPGIVIL). Topologically, residues 218 to 242 (SCYCIIISKLSHSKGYQKRKALKTT) are cytoplasmic. A helical membrane pass occupies residues 243 to 262 (VILILAFFACWLPYYIGISI). Over 263–283 (DSFILLEIIQQGCEFESTVHK) the chain is Extracellular. An involved in dimerization region spans residues 267 to 269 (LLE). Residues 284-303 (WISITEALAFFHCCLNPILY) traverse the membrane as a helical segment. Residues 304-353 (AFLGAKFKTSAQHALTSVSRGSSLKILSKGKRGGHSSVSTESESSSFHSS) lie on the Cytoplasmic side of the membrane. Phosphoserine occurs at positions 320 and 322. Residues S325 and S326 each carry the phosphoserine; by PKC and GRK6 modification. Residues 330-353 (LSKGKRGGHSSVSTESESSSFHSS) form a disordered region. At S331 the chain carries Phosphoserine; by GRK6. A Glycyl lysine isopeptide (Lys-Gly) (interchain with G-Cter in ubiquitin) cross-link involves residue K332. The segment covering 338-353 (HSSVSTESESSSFHSS) has biased composition (low complexity). S340 carries the post-translational modification Phosphoserine; by GRK6. 2 positions are modified to phosphoserine: S349 and S352.

Belongs to the G-protein coupled receptor 1 family. In terms of assembly, monomer. Can form homodimers. Interacts with CD164. Interacts with ARRB2; the interaction is dependent on the C-terminal phosphorylation of CXCR4 and allows activation of MAPK1 and MAPK3. Interacts with ARR3; the interaction is dependent on the C-terminal phosphorylation of CXCR4 and modulates calcium mobilization. Interacts with RNF113A; the interaction, enhanced by CXCL12, promotes CXCR4 ubiquitination and subsequent degradation. Interacts (via the cytoplasmic C-terminal) with ITCH (via the WW domains I and II); the interaction, enhanced by CXCL12, promotes CXCR4 ubiquitination and leads to its degradation. Interacts with extracellular ubiquitin. Interacts with DBN1; this interaction is enhanced by antigenic stimulation. Following LPS binding, may form a complex with GDF5, HSP90AA1 and HSPA8. Post-translationally, phosphorylated on agonist stimulation. Rapidly phosphorylated on serine and threonine residues in the C-terminal. Phosphorylation at Ser-325 and Ser-326 leads to recruitment of ITCH, ubiquitination and protein degradation. In terms of processing, ubiquitinated after ligand binding, leading to its degradation. Ubiquitinated by ITCH at the cell membrane on agonist stimulation. The ubiquitin-dependent mechanism, endosomal sorting complex required for transport (ESCRT), then targets CXCR4 for lysosomal degradation. This process is dependent also on prior Ser-/Thr-phosphorylation in the C-terminal of CXCR4. Also binding of ARRB1 to STAM negatively regulates CXCR4 sorting to lysosomes though modulating ubiquitination of SFR5S. Sulfation is required for efficient binding of CXCL12/SDF-1alpha and promotes its dimerization. Post-translationally, O- and N-glycosylated. N-glycosylation can mask coreceptor function. The O-glycosylation chondroitin sulfate attachment does not affect interaction with CXCL12/SDF-1alpha nor its coreceptor activity.

It localises to the cell membrane. The protein localises to the cell junction. Its subcellular location is the early endosome. It is found in the late endosome. The protein resides in the lysosome. In terms of biological role, receptor for the C-X-C chemokine CXCL12/SDF-1 that transduces a signal by increasing intracellular calcium ion levels and enhancing MAPK1/MAPK3 activation. Involved in the AKT signaling cascade. Plays a role in regulation of cell migration, e.g. during wound healing. Acts as a receptor for extracellular ubiquitin; leading to enhanced intracellular calcium ions and reduced cellular cAMP levels. Binds bacterial lipopolysaccharide (LPS) et mediates LPS-induced inflammatory response, including TNF secretion by monocytes. Involved in hematopoiesis and in cardiac ventricular septum formation. Also plays an essential role in vascularization of the gastrointestinal tract, probably by regulating vascular branching and/or remodeling processes in endothelial cells. Involved in cerebellar development. In the CNS, could mediate hippocampal-neuron survival. The sequence is that of C-X-C chemokine receptor type 4 (CXCR4) from Sus scrofa (Pig).